A 264-amino-acid chain; its full sequence is Putative ankyrin repeat domain-containing protein 19 (264 aa).

5 ANK repeats span residues 67–96, 100–129, 133–162, 166–195, and 199–228; these read KDRTVLHLTCAHGRVEVVTLLLSRRCQINI, LNRTPLMKAVHCQEEACAIILLEHGANPNI, YSNTALHYAVYNKGTSLAEKLLSHHANIEA, EGNTPLLFAINSRRQQIVEFLLKNQANLHA, and FRRTALMLAVQHNSSSIVSLLLQQNINIFS.

This Homo sapiens (Human) protein is Putative ankyrin repeat domain-containing protein 19 (ANKRD19P).